Reading from the N-terminus, the 326-residue chain is MSANLKYLSLGILVFQTTSLVLTMRYSRTLKEEGPRYLSSTAVVVAEFLKIMACIFLVYKDSKCSVRALNRVLHDEILNKPMETLKLAIPSGIYTLQNNLLYVALSNLDAATYQVTYQLKILTTALFSVSMLGKKLGVYQWLSLVILMAGVAFVQWPSDSQELNSKDLSTGSQFVGLMAVLTACFSSGFAGVYFEKILKETKQSVWIRNIQLGFFGSIFGLMGVYVYDGELVSKNGFFQGYNQLTWIVVALQALGGLVIAAVIKYADNILKGFATSLSIILSTIISYFWLQDFVPTSVFFLGAILVIAATFLYGYDPKPAGNPTKA.

The next 8 helical transmembrane spans lie at 4–24 (NLKY…VLTM), 38–58 (LSST…IFLV), 136–156 (LGVY…FVQW), 174–194 (FVGL…GVYF), 212–232 (LGFF…GELV), 243–263 (QLTW…AAVI), 269–289 (ILKG…SYFW), and 293–313 (FVPT…TFLY).

The protein belongs to the nucleotide-sugar transporter family. SLC35A subfamily. Interacts with SLC35A2; the interaction is reduced in the presence of SLC35A4. Found in a complex with SLC35A2 and SLC35A4. Interacts with MGAT4B. O-Glcnacylation regulates the stability of SLC35A3 and the specific complex formation with MGAT4B.

Its subcellular location is the golgi apparatus membrane. The enzyme catalyses UMP(out) + UDP-N-acetyl-alpha-D-glucosamine(in) = UMP(in) + UDP-N-acetyl-alpha-D-glucosamine(out). Transports diphosphate-N-acetylglucosamine (UDP-GlcNAc) from the cytosol into the lumen of the Golgi apparatus, functioning as an antiporter that exchanges UDP-N-acetyl-alpha-D-glucosamine for UMP. May supply UDP-GlcNAc as substrate for Golgi-resident glycosyltransferases that generate highly branched, multiantennary complex N-glycans and keratan sulfate. However, the exact role of SLC35A3 still needs to be elucidated, it could be a member of a catalytically more efficient multiprotein complex rather than function independently as a single transporter. In Mus musculus (Mouse), this protein is UDP-N-acetylglucosamine transporter (Slc35a3).